Reading from the N-terminus, the 122-residue chain is Large ribosomal subunit protein uL14 (122 aa).

Belongs to the universal ribosomal protein uL14 family. Part of the 50S ribosomal subunit. Forms a cluster with proteins L3 and L19. In the 70S ribosome, L14 and L19 interact and together make contacts with the 16S rRNA in bridges B5 and B8.

Binds to 23S rRNA. Forms part of two intersubunit bridges in the 70S ribosome. In Cupriavidus metallidurans (strain ATCC 43123 / DSM 2839 / NBRC 102507 / CH34) (Ralstonia metallidurans), this protein is Large ribosomal subunit protein uL14.